Reading from the N-terminus, the 643-residue chain is Macrolide export ATP-binding/permease protein MacB (643 aa).

One can recognise an ABC transporter domain in the interval 4–242 (IEIKELNRYF…VNNQSKAKSR (239 aa)). 40 to 47 (GQSGSGKS) serves as a coordination point for ATP. 4 helical membrane-spanning segments follow: residues 269-289 (LLTMLGIIIGITSVVSVVALG), 523-543 (IAFISLIVGGIGVMNIMLVSV), 572-592 (ILICMIGGISGIMLSLIIGGI), and 603-623 (VFSTFSIVAAVLCSTLIGVIF).

It belongs to the ABC transporter superfamily. Macrolide exporter (TC 3.A.1.122) family. As to quaternary structure, homodimer. Part of the tripartite efflux system MacAB-TolC, which is composed of an inner membrane transporter, MacB, a periplasmic membrane fusion protein, MacA, and an outer membrane component, TolC. The complex forms a large protein conduit and can translocate molecules across both the inner and outer membranes. Interacts with MacA.

The protein localises to the cell inner membrane. Functionally, part of the tripartite efflux system MacAB-TolC. MacB is a non-canonical ABC transporter that contains transmembrane domains (TMD), which form a pore in the inner membrane, and an ATP-binding domain (NBD), which is responsible for energy generation. Confers resistance against macrolides. This Mannheimia succiniciproducens (strain KCTC 0769BP / MBEL55E) protein is Macrolide export ATP-binding/permease protein MacB.